We begin with the raw amino-acid sequence, 168 residues long: Peptide deformylase 2 (168 aa).

Cys-91 and His-133 together coordinate Fe cation. Glu-134 is an active-site residue. His-137 is a Fe cation binding site.

It belongs to the polypeptide deformylase family. Requires Fe(2+) as cofactor.

It carries out the reaction N-terminal N-formyl-L-methionyl-[peptide] + H2O = N-terminal L-methionyl-[peptide] + formate. Removes the formyl group from the N-terminal Met of newly synthesized proteins. Requires at least a dipeptide for an efficient rate of reaction. N-terminal L-methionine is a prerequisite for activity but the enzyme has broad specificity at other positions. The polypeptide is Peptide deformylase 2 (Vibrio cholerae serotype O1 (strain ATCC 39315 / El Tor Inaba N16961)).